Here is a 233-residue protein sequence, read N- to C-terminus: Ribonuclease 3 (233 aa).

The 123-residue stretch at 4–126 (LNKLMERLGH…IVGAIYIDAG (123 aa)) folds into the RNase III domain. A Mg(2+)-binding site is contributed by E39. Residue D43 is part of the active site. The Mg(2+) site is built by D112 and E115. E115 is an active-site residue. The 70-residue stretch at 153–222 (DAKSLLQEWL…AKRFLELLDD (70 aa)) folds into the DRBM domain.

This sequence belongs to the ribonuclease III family. Homodimer. It depends on Mg(2+) as a cofactor.

Its subcellular location is the cytoplasm. It catalyses the reaction Endonucleolytic cleavage to 5'-phosphomonoester.. Its function is as follows. Digests double-stranded RNA. Involved in the processing of primary rRNA transcript to yield the immediate precursors to the large and small rRNAs (23S and 16S). Processes some mRNAs, and tRNAs when they are encoded in the rRNA operon. Processes pre-crRNA and tracrRNA of type II CRISPR loci if present in the organism. The chain is Ribonuclease 3 from Coxiella burnetii (strain Dugway 5J108-111).